Consider the following 947-residue polypeptide: Beta-glucosidase (947 aa).

Asp696 is an active-site residue.

Belongs to the glycosyl hydrolase 3 family.

It catalyses the reaction Hydrolysis of terminal, non-reducing beta-D-glucosyl residues with release of beta-D-glucose.. The protein operates within glycan metabolism; cellulose degradation. This Ruminococcus albus protein is Beta-glucosidase.